The sequence spans 278 residues: Large ribosomal subunit protein uL2 (278 aa).

Disordered stretches follow at residues 28-58 and 223-278; these read TPEK…GGGH and GVVM…KNKR. Residues 43 to 53 show a composition bias toward polar residues; that stretch reads RNNQGRITTRH. The span at 268–278 shows a compositional bias: basic residues; that stretch reads IRRRKTGKNKR.

The protein belongs to the universal ribosomal protein uL2 family. Part of the 50S ribosomal subunit. Forms a bridge to the 30S subunit in the 70S ribosome.

Functionally, one of the primary rRNA binding proteins. Required for association of the 30S and 50S subunits to form the 70S ribosome, for tRNA binding and peptide bond formation. It has been suggested to have peptidyltransferase activity; this is somewhat controversial. Makes several contacts with the 16S rRNA in the 70S ribosome. This chain is Large ribosomal subunit protein uL2, found in Nocardioides sp. (strain ATCC BAA-499 / JS614).